A 395-amino-acid polypeptide reads, in one-letter code: Xylose isomerase (395 aa).

Residues His54 and Asp57 contribute to the active site. Residues Glu181, Glu217, His220, Asp245, Asp255, Asp257, and Asp293 each contribute to the Mg(2+) site.

It belongs to the xylose isomerase family. In terms of assembly, homotetramer. It depends on Mg(2+) as a cofactor.

Its subcellular location is the cytoplasm. The catalysed reaction is alpha-D-xylose = alpha-D-xylulofuranose. This is Xylose isomerase (xylA) from Arthrobacter sp. (strain NRRL B3728).